We begin with the raw amino-acid sequence, 154 residues long: 3-hydroxyacyl-[acyl-carrier-protein] dehydratase FabZ (154 aa).

The active site involves His-54.

It belongs to the thioester dehydratase family. FabZ subfamily.

The protein resides in the cytoplasm. The catalysed reaction is a (3R)-hydroxyacyl-[ACP] = a (2E)-enoyl-[ACP] + H2O. In terms of biological role, involved in unsaturated fatty acids biosynthesis. Catalyzes the dehydration of short chain beta-hydroxyacyl-ACPs and long chain saturated and unsaturated beta-hydroxyacyl-ACPs. In Chlamydia caviae (strain ATCC VR-813 / DSM 19441 / 03DC25 / GPIC) (Chlamydophila caviae), this protein is 3-hydroxyacyl-[acyl-carrier-protein] dehydratase FabZ.